The primary structure comprises 216 residues: MSITAAQVNELRKATGAGLMDCKKALTETGGDHEKAIDYLRTKGLAAASKKAGRAATEGLVGSYIHAGGKIGVLVEVNCETDFVAKNENFQGFVKDIAMHIAAASPLYVRREEVPAELIEREKAIYREKAKESGKPAAIIEKILDGQINKFFADICLLEQTYVKDPDKTIQTFLNETIASIGENMSIRRFAKFVLGEGLAKKESDFAAEVAAAVGQ.

An involved in Mg(2+) ion dislocation from EF-Tu region spans residues 81-84 (TDFV).

Belongs to the EF-Ts family.

The protein localises to the cytoplasm. Associates with the EF-Tu.GDP complex and induces the exchange of GDP to GTP. It remains bound to the aminoacyl-tRNA.EF-Tu.GTP complex up to the GTP hydrolysis stage on the ribosome. The polypeptide is Elongation factor Ts (Citrifermentans bemidjiense (strain ATCC BAA-1014 / DSM 16622 / JCM 12645 / Bem) (Geobacter bemidjiensis)).